A 322-amino-acid polypeptide reads, in one-letter code: Putative nickel/cobalt efflux system HI_1248 (322 aa).

The next 6 membrane-spanning stretches (helical) occupy residues 7 to 27 (GLVL…WFFL), 54 to 74 (AGTT…LGPG), 100 to 120 (LSSL…VVVL), 137 to 157 (TALL…LRAY), 228 to 248 (IFVL…LAVL), and 294 to 314 (LIAG…TTIS).

It belongs to the NiCoT transporter (TC 2.A.52) family.

The protein resides in the cell membrane. Functionally, efflux system for nickel and cobalt. The protein is Putative nickel/cobalt efflux system HI_1248 of Haemophilus influenzae (strain ATCC 51907 / DSM 11121 / KW20 / Rd).